We begin with the raw amino-acid sequence, 585 residues long: Probable inactive serine/threonine-protein kinase slob1 (585 aa).

The FYVE-type zinc-finger motif lies at 21 to 82 (DQSSLECNDC…LCRSCNNSFE (62 aa)). Residues Cys27, Cys30, Cys43, Cys46, Cys51, Cys54, Cys74, and Cys77 each contribute to the Zn(2+) site. Residues 108–478 (SKPLQDIGHT…STSLLNNSFN (371 aa)) enclose the Protein kinase domain. Composition is skewed to low complexity over residues 426–456 (ISKLSSSSSNNNSNNNNNNNNNSNTFNNISS) and 466–503 (LPSSTSLLNNSFNLSNNNNPSSPSTSTISPNSSLISSP). The interval 426 to 585 (ISKLSSSSSN…SLKPSSTKKK (160 aa)) is disordered. The span at 513–532 (TPPPPPPPPKSAPPPPPPPS) shows a compositional bias: pro residues. The segment covering 533 to 542 (SSKLPPSSSS) has biased composition (low complexity). The 21-residue stretch at 542–562 (SRNSLLESIRNADNAKKLKKT) folds into the WH2 domain.

The protein belongs to the protein kinase superfamily. Ser/Thr protein kinase family.

The chain is Probable inactive serine/threonine-protein kinase slob1 (slob1) from Dictyostelium discoideum (Social amoeba).